The sequence spans 504 residues: ATP synthase subunit alpha 2 (504 aa).

Position 169 to 176 (169 to 176 (GDRQTGKT)) interacts with ATP.

This sequence belongs to the ATPase alpha/beta chains family. F-type ATPases have 2 components, CF(1) - the catalytic core - and CF(0) - the membrane proton channel. CF(1) has five subunits: alpha(3), beta(3), gamma(1), delta(1), epsilon(1). CF(0) has three main subunits: a(1), b(2) and c(9-12). The alpha and beta chains form an alternating ring which encloses part of the gamma chain. CF(1) is attached to CF(0) by a central stalk formed by the gamma and epsilon chains, while a peripheral stalk is formed by the delta and b chains.

It is found in the cell membrane. It carries out the reaction ATP + H2O + 4 H(+)(in) = ADP + phosphate + 5 H(+)(out). Its function is as follows. Produces ATP from ADP in the presence of a proton gradient across the membrane. The alpha chain is a regulatory subunit. In Listeria innocua serovar 6a (strain ATCC BAA-680 / CLIP 11262), this protein is ATP synthase subunit alpha 2.